The following is a 618-amino-acid chain: Chaperone protein HscA homolog (618 aa).

This sequence belongs to the heat shock protein 70 family.

Its function is as follows. Chaperone involved in the maturation of iron-sulfur cluster-containing proteins. Has a low intrinsic ATPase activity which is markedly stimulated by HscB. In Variovorax paradoxus (strain S110), this protein is Chaperone protein HscA homolog.